Reading from the N-terminus, the 144-residue chain is MKIQVINKSKHALPEYATGQSAGMDIRANLDEPIVLKPLQRCLVPTGLYIALPEGFEAQIRPRSGLAIKKGIGVLNSPGTIDADYRGEICIILVNLSSEDFMIEDGERIAQMVVARHEHAEWQEVEVLDETERGAGGFGHTGKK.

Residues 63–65 (RSG), asparagine 76, and 80–82 (TID) each bind substrate.

The protein belongs to the dUTPase family. Mg(2+) is required as a cofactor.

The catalysed reaction is dUTP + H2O = dUMP + diphosphate + H(+). The protein operates within pyrimidine metabolism; dUMP biosynthesis; dUMP from dCTP (dUTP route): step 2/2. Its function is as follows. This enzyme is involved in nucleotide metabolism: it produces dUMP, the immediate precursor of thymidine nucleotides and it decreases the intracellular concentration of dUTP so that uracil cannot be incorporated into DNA. This chain is Deoxyuridine 5'-triphosphate nucleotidohydrolase, found in Phocaeicola vulgatus (strain ATCC 8482 / DSM 1447 / JCM 5826 / CCUG 4940 / NBRC 14291 / NCTC 11154) (Bacteroides vulgatus).